The following is a 395-amino-acid chain: Polar tube protein 1 (395 aa).

A signal peptide spans Met-1–Ser-22. Disordered stretches follow at residues Cys-59–Glu-95 and Pro-111–Leu-133. Positions Ser-68–Pro-80 are enriched in low complexity. The segment covering Gly-81 to Ser-91 has biased composition (polar residues). Asn-86 carries N-linked (GlcNAc...) asparagine glycosylation. The segment covering Pro-111–Glu-128 has biased composition (low complexity). Asn-173 carries an N-linked (GlcNAc...) asparagine glycan. A run of 4 repeats spans residues Pro-179–Thr-204, Pro-205–Thr-230, Pro-231–Thr-256, and Pro-257–Thr-282. The interval Pro-179–Thr-282 is 4 X 26 AA approximate tandem repeats. The tract at residues Gln-277–Gln-300 is disordered. Residues Pro-280 to Gln-300 show a composition bias toward low complexity. N-linked (GlcNAc...) asparagine glycosylation occurs at Asn-311.

Interacts with PTP2 and PTP3.

The protein resides in the spore polar tube. Its function is as follows. Involved with PTP2 and PTP3 in the formation of the polar tube through which the infectious agent is passed on to the host cell. Accounts for at least 70 percent of the mass of the polar tube. This is Polar tube protein 1 (PTP1) from Encephalitozoon cuniculi (strain GB-M1) (Microsporidian parasite).